A 177-amino-acid chain; its full sequence is Large ribosomal subunit protein uL6 (177 aa).

The protein belongs to the universal ribosomal protein uL6 family. Part of the 50S ribosomal subunit.

This protein binds to the 23S rRNA, and is important in its secondary structure. It is located near the subunit interface in the base of the L7/L12 stalk, and near the tRNA binding site of the peptidyltransferase center. This Albidiferax ferrireducens (strain ATCC BAA-621 / DSM 15236 / T118) (Rhodoferax ferrireducens) protein is Large ribosomal subunit protein uL6.